A 264-amino-acid polypeptide reads, in one-letter code: 3-methyl-2-oxobutanoate hydroxymethyltransferase (264 aa).

Positions 45 and 84 each coordinate Mg(2+). 3-methyl-2-oxobutanoate-binding positions include 45–46 (DS), Asp-84, and Lys-112. Glu-114 is a binding site for Mg(2+). Glu-181 (proton acceptor) is an active-site residue.

Belongs to the PanB family. In terms of assembly, homodecamer; pentamer of dimers. Mg(2+) serves as cofactor.

Its subcellular location is the cytoplasm. It catalyses the reaction 3-methyl-2-oxobutanoate + (6R)-5,10-methylene-5,6,7,8-tetrahydrofolate + H2O = 2-dehydropantoate + (6S)-5,6,7,8-tetrahydrofolate. It functions in the pathway cofactor biosynthesis; (R)-pantothenate biosynthesis; (R)-pantoate from 3-methyl-2-oxobutanoate: step 1/2. Catalyzes the reversible reaction in which hydroxymethyl group from 5,10-methylenetetrahydrofolate is transferred onto alpha-ketoisovalerate to form ketopantoate. This chain is 3-methyl-2-oxobutanoate hydroxymethyltransferase, found in Escherichia coli (strain 55989 / EAEC).